A 425-amino-acid polypeptide reads, in one-letter code: Serine--tRNA ligase (425 aa).

230–232 (TAE) serves as a coordination point for L-serine. 261 to 263 (RSE) lines the ATP pocket. Glu284 contacts L-serine. 348–351 (EISS) provides a ligand contact to ATP. Ser384 contributes to the L-serine binding site.

This sequence belongs to the class-II aminoacyl-tRNA synthetase family. Type-1 seryl-tRNA synthetase subfamily. As to quaternary structure, homodimer. The tRNA molecule binds across the dimer.

The protein resides in the cytoplasm. The catalysed reaction is tRNA(Ser) + L-serine + ATP = L-seryl-tRNA(Ser) + AMP + diphosphate + H(+). It carries out the reaction tRNA(Sec) + L-serine + ATP = L-seryl-tRNA(Sec) + AMP + diphosphate + H(+). It functions in the pathway aminoacyl-tRNA biosynthesis; selenocysteinyl-tRNA(Sec) biosynthesis; L-seryl-tRNA(Sec) from L-serine and tRNA(Sec): step 1/1. Its function is as follows. Catalyzes the attachment of serine to tRNA(Ser). Is also able to aminoacylate tRNA(Sec) with serine, to form the misacylated tRNA L-seryl-tRNA(Sec), which will be further converted into selenocysteinyl-tRNA(Sec). This is Serine--tRNA ligase from Streptococcus equi subsp. equi (strain 4047).